The primary structure comprises 500 residues: Proline--tRNA ligase (500 aa).

It belongs to the class-II aminoacyl-tRNA synthetase family. ProS type 3 subfamily. In terms of assembly, homodimer.

It is found in the cytoplasm. The enzyme catalyses tRNA(Pro) + L-proline + ATP = L-prolyl-tRNA(Pro) + AMP + diphosphate. Functionally, catalyzes the attachment of proline to tRNA(Pro) in a two-step reaction: proline is first activated by ATP to form Pro-AMP and then transferred to the acceptor end of tRNA(Pro). The protein is Proline--tRNA ligase of Paramagnetospirillum magneticum (strain ATCC 700264 / AMB-1) (Magnetospirillum magneticum).